We begin with the raw amino-acid sequence, 485 residues long: MASEVRVRFAPSPTGHLHIGGARSALFNYLFAKNQGGMFVLRIEDTDQARNVGQAKEKLLDSLKWLGVEWDESIDVGGEYGPYSSMERLDIYKKHIEQLLNEGKAYYCYMTEEELEAEREAQIARGEMPKYSGRDRDLTEEQRRAYEAKGIKPVVRFRVPEGQVIKIQDAVRGEVSFESDGIGDFVIARKDGVPMYNFAVVVDDHLMKISHVIRGEEHLSNTPRQVMLYEAFGWDVPTFAHASLILNPNRQKMSKRDESIIQFVEQYKELGYMPEAIVNFLALLGWSPVGEEEIFSLEELAAQFSLERVSKAPAVFDTDKLAWMNNQYIKNADLDDVVALALPHLQKAGKLPESLSEEQAEWAKAVISLYQEQLHYGAEIVELTELFFKTEIQYNDEAQEVLNEEQVPGVLSGFLQELEGLDTWDAVSIKGAIKATQKATGQKGKKLFMPIRVATTGQTHGPELPSAIKLIGKEIVTHRLRSLLN.

The 'HIGH' region signature appears at 11 to 21 (PSPTGHLHIGG). A 'KMSKS' region motif is present at residues 252–256 (KMSKR). K255 is a binding site for ATP.

Belongs to the class-I aminoacyl-tRNA synthetase family. Glutamate--tRNA ligase type 1 subfamily. As to quaternary structure, monomer.

It localises to the cytoplasm. The catalysed reaction is tRNA(Glu) + L-glutamate + ATP = L-glutamyl-tRNA(Glu) + AMP + diphosphate. Its function is as follows. Catalyzes the attachment of glutamate to tRNA(Glu) in a two-step reaction: glutamate is first activated by ATP to form Glu-AMP and then transferred to the acceptor end of tRNA(Glu). The protein is Glutamate--tRNA ligase of Halalkalibacterium halodurans (strain ATCC BAA-125 / DSM 18197 / FERM 7344 / JCM 9153 / C-125) (Bacillus halodurans).